We begin with the raw amino-acid sequence, 72 residues long: Translation initiation factor IF-1 (72 aa).

Residues 1 to 72 (MAKEETIQMQ…SRARITFRAK (72 aa)) form the S1-like domain.

This sequence belongs to the IF-1 family. In terms of assembly, component of the 30S ribosomal translation pre-initiation complex which assembles on the 30S ribosome in the order IF-2 and IF-3, IF-1 and N-formylmethionyl-tRNA(fMet); mRNA recruitment can occur at any time during PIC assembly.

It localises to the cytoplasm. In terms of biological role, one of the essential components for the initiation of protein synthesis. Stabilizes the binding of IF-2 and IF-3 on the 30S subunit to which N-formylmethionyl-tRNA(fMet) subsequently binds. Helps modulate mRNA selection, yielding the 30S pre-initiation complex (PIC). Upon addition of the 50S ribosomal subunit IF-1, IF-2 and IF-3 are released leaving the mature 70S translation initiation complex. This chain is Translation initiation factor IF-1, found in Nitrosospira multiformis (strain ATCC 25196 / NCIMB 11849 / C 71).